Reading from the N-terminus, the 50-residue chain is Sperm protamine P1 (50 aa).

Cystine bridges form between C7/C15 and C38/C46.

It belongs to the protamine P1 family. As to quaternary structure, cross-linked by interchain disulfide bonds around the DNA-helix. Testis.

The protein resides in the nucleus. Its subcellular location is the chromosome. In terms of biological role, protamines substitute for histones in the chromatin of sperm during the haploid phase of spermatogenesis. They compact sperm DNA into a highly condensed, stable and inactive complex. The sequence is that of Sperm protamine P1 (PRM1) from Equus caballus (Horse).